The following is a 227-amino-acid chain: MNSIEFSLLDRTTPNSFISTTSNDLSNWSRLSSLWPLLYGTSCCFIEFASLIGSRFDFDRYGLVPRSSPRQADLILTAGTVTMKMAPSLVRLYEQMPEPKYVIAMGACTITGGMFSTDSYSTVRGVDKLIPVDVYLPGCPPKPEAVIDAITKLRKKISREIYEDRIRLQRENRSFTFTTNHKFRVVCSTNTGNYDQGLLYQPPSTSEIPPETFFKYKSSVSSPEFIN.

The [4Fe-4S] cluster site is built by cysteine 43, cysteine 44, cysteine 108, and cysteine 139.

Belongs to the complex I 20 kDa subunit family. As to quaternary structure, NDH is composed of at least 16 different subunits, 5 of which are encoded in the nucleus. Requires [4Fe-4S] cluster as cofactor.

It is found in the plastid. It localises to the chloroplast thylakoid membrane. It catalyses the reaction a plastoquinone + NADH + (n+1) H(+)(in) = a plastoquinol + NAD(+) + n H(+)(out). The catalysed reaction is a plastoquinone + NADPH + (n+1) H(+)(in) = a plastoquinol + NADP(+) + n H(+)(out). In terms of biological role, NDH shuttles electrons from NAD(P)H:plastoquinone, via FMN and iron-sulfur (Fe-S) centers, to quinones in the photosynthetic chain and possibly in a chloroplast respiratory chain. The immediate electron acceptor for the enzyme in this species is believed to be plastoquinone. Couples the redox reaction to proton translocation, and thus conserves the redox energy in a proton gradient. This Citrus sinensis (Sweet orange) protein is NAD(P)H-quinone oxidoreductase subunit K, chloroplastic.